The chain runs to 244 residues: tRNA (guanine-N(1)-)-methyltransferase (244 aa).

Residues G113 and 133–138 (IGDYVL) contribute to the S-adenosyl-L-methionine site.

The protein belongs to the RNA methyltransferase TrmD family. Homodimer.

The protein localises to the cytoplasm. The enzyme catalyses guanosine(37) in tRNA + S-adenosyl-L-methionine = N(1)-methylguanosine(37) in tRNA + S-adenosyl-L-homocysteine + H(+). Its function is as follows. Specifically methylates guanosine-37 in various tRNAs. This Bacillus anthracis (strain A0248) protein is tRNA (guanine-N(1)-)-methyltransferase.